A 492-amino-acid polypeptide reads, in one-letter code: Glutamate--tRNA ligase (492 aa).

The short motif at 13–23 (PSPTGTPHVGM) is the 'HIGH' region element. Residues 257–261 (KLSKR) carry the 'KMSKS' region motif. Lysine 260 contributes to the ATP binding site.

Belongs to the class-I aminoacyl-tRNA synthetase family. Glutamate--tRNA ligase type 1 subfamily. As to quaternary structure, monomer.

The protein resides in the cytoplasm. The catalysed reaction is tRNA(Glu) + L-glutamate + ATP = L-glutamyl-tRNA(Glu) + AMP + diphosphate. In terms of biological role, catalyzes the attachment of glutamate to tRNA(Glu) in a two-step reaction: glutamate is first activated by ATP to form Glu-AMP and then transferred to the acceptor end of tRNA(Glu). The sequence is that of Glutamate--tRNA ligase from Mycolicibacterium paratuberculosis (strain ATCC BAA-968 / K-10) (Mycobacterium paratuberculosis).